The following is a 150-amino-acid chain: Peptide deformylase (150 aa).

Residues cysteine 88 and histidine 130 each coordinate Fe cation. Residue glutamate 131 is part of the active site. Histidine 134 contacts Fe cation.

It belongs to the polypeptide deformylase family. Requires Fe(2+) as cofactor.

The enzyme catalyses N-terminal N-formyl-L-methionyl-[peptide] + H2O = N-terminal L-methionyl-[peptide] + formate. Its function is as follows. Removes the formyl group from the N-terminal Met of newly synthesized proteins. Requires at least a dipeptide for an efficient rate of reaction. N-terminal L-methionine is a prerequisite for activity but the enzyme has broad specificity at other positions. This Desulfitobacterium hafniense (strain Y51) protein is Peptide deformylase.